We begin with the raw amino-acid sequence, 202 residues long: NADH-quinone oxidoreductase subunit C (202 aa).

This sequence belongs to the complex I 30 kDa subunit family. NDH-1 is composed of 14 different subunits. Subunits NuoB, C, D, E, F, and G constitute the peripheral sector of the complex.

Its subcellular location is the cell inner membrane. The enzyme catalyses a quinone + NADH + 5 H(+)(in) = a quinol + NAD(+) + 4 H(+)(out). Its function is as follows. NDH-1 shuttles electrons from NADH, via FMN and iron-sulfur (Fe-S) centers, to quinones in the respiratory chain. The immediate electron acceptor for the enzyme in this species is believed to be ubiquinone. Couples the redox reaction to proton translocation (for every two electrons transferred, four hydrogen ions are translocated across the cytoplasmic membrane), and thus conserves the redox energy in a proton gradient. This Hyphomonas neptunium (strain ATCC 15444) protein is NADH-quinone oxidoreductase subunit C.